The chain runs to 278 residues: S-adenosylmethionine decarboxylase proenzyme (278 aa).

The tract at residues 96 to 115 is disordered; it reads LTPESLTGESPGPLPGNKPS. The active-site Schiff-base intermediate with substrate; via pyruvic acid is Ser126. Ser126 is modified (pyruvic acid (Ser); by autocatalysis). His131 functions as the Proton acceptor; for processing activity in the catalytic mechanism. Cys154 functions as the Proton donor; for catalytic activity in the catalytic mechanism.

This sequence belongs to the prokaryotic AdoMetDC family. Type 2 subfamily. As to quaternary structure, heterooctamer of four alpha and four beta chains arranged as a tetramer of alpha/beta heterodimers. It depends on pyruvate as a cofactor. In terms of processing, is synthesized initially as an inactive proenzyme. Formation of the active enzyme involves a self-maturation process in which the active site pyruvoyl group is generated from an internal serine residue via an autocatalytic post-translational modification. Two non-identical subunits are generated from the proenzyme in this reaction, and the pyruvate is formed at the N-terminus of the alpha chain, which is derived from the carboxyl end of the proenzyme. The post-translation cleavage follows an unusual pathway, termed non-hydrolytic serinolysis, in which the side chain hydroxyl group of the serine supplies its oxygen atom to form the C-terminus of the beta chain, while the remainder of the serine residue undergoes an oxidative deamination to produce ammonia and the pyruvoyl group blocking the N-terminus of the alpha chain.

It carries out the reaction S-adenosyl-L-methionine + H(+) = S-adenosyl 3-(methylsulfanyl)propylamine + CO2. Its pathway is amine and polyamine biosynthesis; S-adenosylmethioninamine biosynthesis; S-adenosylmethioninamine from S-adenosyl-L-methionine: step 1/1. In terms of biological role, catalyzes the decarboxylation of S-adenosylmethionine to S-adenosylmethioninamine (dcAdoMet), the propylamine donor required for the synthesis of the polyamines spermine and spermidine from the diamine putrescine. This is S-adenosylmethionine decarboxylase proenzyme from Alkaliphilus metalliredigens (strain QYMF).